The primary structure comprises 714 residues: Phosphoribosylformylglycinamidine synthase subunit PurL (714 aa).

His-34 is an active-site residue. Tyr-37 provides a ligand contact to ATP. Residue Glu-78 participates in Mg(2+) binding. Residues 79–82 (SHNH) and Arg-101 contribute to the substrate site. His-80 functions as the Proton acceptor in the catalytic mechanism. Asp-102 lines the Mg(2+) pocket. Position 226 (Gln-226) interacts with substrate. Asp-254 contributes to the Mg(2+) binding site. 298-300 (ESQ) is a binding site for substrate. ATP-binding residues include Asp-474 and Gly-511. Asn-512 serves as a coordination point for Mg(2+). Ser-514 contributes to the substrate binding site.

This sequence belongs to the FGAMS family. Monomer. Part of the FGAM synthase complex composed of 1 PurL, 1 PurQ and 2 PurS subunits.

It localises to the cytoplasm. The catalysed reaction is N(2)-formyl-N(1)-(5-phospho-beta-D-ribosyl)glycinamide + L-glutamine + ATP + H2O = 2-formamido-N(1)-(5-O-phospho-beta-D-ribosyl)acetamidine + L-glutamate + ADP + phosphate + H(+). It participates in purine metabolism; IMP biosynthesis via de novo pathway; 5-amino-1-(5-phospho-D-ribosyl)imidazole from N(2)-formyl-N(1)-(5-phospho-D-ribosyl)glycinamide: step 1/2. Part of the phosphoribosylformylglycinamidine synthase complex involved in the purines biosynthetic pathway. Catalyzes the ATP-dependent conversion of formylglycinamide ribonucleotide (FGAR) and glutamine to yield formylglycinamidine ribonucleotide (FGAM) and glutamate. The FGAM synthase complex is composed of three subunits. PurQ produces an ammonia molecule by converting glutamine to glutamate. PurL transfers the ammonia molecule to FGAR to form FGAM in an ATP-dependent manner. PurS interacts with PurQ and PurL and is thought to assist in the transfer of the ammonia molecule from PurQ to PurL. This Methanothermobacter thermautotrophicus (strain ATCC 29096 / DSM 1053 / JCM 10044 / NBRC 100330 / Delta H) (Methanobacterium thermoautotrophicum) protein is Phosphoribosylformylglycinamidine synthase subunit PurL.